We begin with the raw amino-acid sequence, 189 residues long: Protein GrpE (189 aa).

The span at 1-20 (MSDQQHSAPQNAAATASPSD) shows a compositional bias: polar residues. The disordered stretch occupies residues 1 to 29 (MSDQQHSAPQNAAATASPSDSPEAVEATM).

Belongs to the GrpE family. Homodimer.

Its subcellular location is the cytoplasm. Functionally, participates actively in the response to hyperosmotic and heat shock by preventing the aggregation of stress-denatured proteins, in association with DnaK and GrpE. It is the nucleotide exchange factor for DnaK and may function as a thermosensor. Unfolded proteins bind initially to DnaJ; upon interaction with the DnaJ-bound protein, DnaK hydrolyzes its bound ATP, resulting in the formation of a stable complex. GrpE releases ADP from DnaK; ATP binding to DnaK triggers the release of the substrate protein, thus completing the reaction cycle. Several rounds of ATP-dependent interactions between DnaJ, DnaK and GrpE are required for fully efficient folding. This Paracidovorax citrulli (strain AAC00-1) (Acidovorax citrulli) protein is Protein GrpE.